The sequence spans 236 residues: MSKKVSKNVAKARAAVEPRPYTLQDAVPLLQQVKFAKFDETVDLTMRLGVDPRHADQMVRGTVVLPHGLGKTKKVAVITTGDRQKEAEAAGAEIVGGEELVEKIQKESWTDFDALIATPDMMRSVGRLGKVLGPRGLMPNPKTGTVTNDVAAAVKEIKAGKIEYRTDKTALVHVPVGKLSFPAEKLIDNAMTVITSVVRAKPSAAKGKYIKGITLSSTMGPGIPLDGSVADAAAKA.

Belongs to the universal ribosomal protein uL1 family. As to quaternary structure, part of the 50S ribosomal subunit.

In terms of biological role, binds directly to 23S rRNA. The L1 stalk is quite mobile in the ribosome, and is involved in E site tRNA release. Its function is as follows. Protein L1 is also a translational repressor protein, it controls the translation of the L11 operon by binding to its mRNA. The sequence is that of Large ribosomal subunit protein uL1 from Acidobacterium capsulatum (strain ATCC 51196 / DSM 11244 / BCRC 80197 / JCM 7670 / NBRC 15755 / NCIMB 13165 / 161).